Here is a 263-residue protein sequence, read N- to C-terminus: 4-hydroxy-tetrahydrodipicolinate reductase (263 aa).

NAD(+) contacts are provided by residues 7–12 (GASGRM) and aspartate 33. Arginine 34 is a binding site for NADP(+). NAD(+) contacts are provided by residues 96–98 (GTT) and 120–123 (APNM). The active-site Proton donor/acceptor is histidine 153. Histidine 154 serves as a coordination point for (S)-2,3,4,5-tetrahydrodipicolinate. Lysine 157 functions as the Proton donor in the catalytic mechanism. A (S)-2,3,4,5-tetrahydrodipicolinate-binding site is contributed by 163–164 (GT).

Belongs to the DapB family.

It is found in the cytoplasm. The enzyme catalyses (S)-2,3,4,5-tetrahydrodipicolinate + NAD(+) + H2O = (2S,4S)-4-hydroxy-2,3,4,5-tetrahydrodipicolinate + NADH + H(+). It catalyses the reaction (S)-2,3,4,5-tetrahydrodipicolinate + NADP(+) + H2O = (2S,4S)-4-hydroxy-2,3,4,5-tetrahydrodipicolinate + NADPH + H(+). It functions in the pathway amino-acid biosynthesis; L-lysine biosynthesis via DAP pathway; (S)-tetrahydrodipicolinate from L-aspartate: step 4/4. Functionally, catalyzes the conversion of 4-hydroxy-tetrahydrodipicolinate (HTPA) to tetrahydrodipicolinate. This Ralstonia pickettii (strain 12J) protein is 4-hydroxy-tetrahydrodipicolinate reductase.